Here is a 384-residue protein sequence, read N- to C-terminus: Dual-specificity RNA methyltransferase RlmN (384 aa).

The Proton acceptor role is filled by Glu93. The region spanning Glu99–Asp339 is the Radical SAM core domain. Cysteines 106 and 344 form a disulfide. Residues Cys113, Cys117, and Cys120 each contribute to the [4Fe-4S] cluster site. Residues Gly170–Glu171, Ser202, Ser224–His226, and Asn301 each bind S-adenosyl-L-methionine. Cys344 functions as the S-methylcysteine intermediate in the catalytic mechanism.

It belongs to the radical SAM superfamily. RlmN family. [4Fe-4S] cluster serves as cofactor.

It is found in the cytoplasm. It catalyses the reaction adenosine(2503) in 23S rRNA + 2 reduced [2Fe-2S]-[ferredoxin] + 2 S-adenosyl-L-methionine = 2-methyladenosine(2503) in 23S rRNA + 5'-deoxyadenosine + L-methionine + 2 oxidized [2Fe-2S]-[ferredoxin] + S-adenosyl-L-homocysteine. The catalysed reaction is adenosine(37) in tRNA + 2 reduced [2Fe-2S]-[ferredoxin] + 2 S-adenosyl-L-methionine = 2-methyladenosine(37) in tRNA + 5'-deoxyadenosine + L-methionine + 2 oxidized [2Fe-2S]-[ferredoxin] + S-adenosyl-L-homocysteine. Functionally, specifically methylates position 2 of adenine 2503 in 23S rRNA and position 2 of adenine 37 in tRNAs. m2A2503 modification seems to play a crucial role in the proofreading step occurring at the peptidyl transferase center and thus would serve to optimize ribosomal fidelity. The chain is Dual-specificity RNA methyltransferase RlmN from Cupriavidus pinatubonensis (strain JMP 134 / LMG 1197) (Cupriavidus necator (strain JMP 134)).